Here is a 352-residue protein sequence, read N- to C-terminus: Holliday junction branch migration complex subunit RuvB (352 aa).

The segment at 4-185 (ADRLIAATGP…FGIVQRLEFY (182 aa)) is large ATPase domain (RuvB-L). Residues isoleucine 24, arginine 25, glycine 66, lysine 69, threonine 70, threonine 71, 132 to 134 (EDF), arginine 175, tyrosine 185, and arginine 222 contribute to the ATP site. Threonine 70 is a Mg(2+) binding site. A small ATPAse domain (RuvB-S) region spans residues 186 to 256 (STADLATIVS…VADLALNLLD (71 aa)). Residues 259-352 (EHGFDHQDRR…VDEFLDAVDD (94 aa)) form a head domain (RuvB-H) region. DNA contacts are provided by arginine 295, arginine 314, and arginine 319.

The protein belongs to the RuvB family. As to quaternary structure, homohexamer. Forms an RuvA(8)-RuvB(12)-Holliday junction (HJ) complex. HJ DNA is sandwiched between 2 RuvA tetramers; dsDNA enters through RuvA and exits via RuvB. An RuvB hexamer assembles on each DNA strand where it exits the tetramer. Each RuvB hexamer is contacted by two RuvA subunits (via domain III) on 2 adjacent RuvB subunits; this complex drives branch migration. In the full resolvosome a probable DNA-RuvA(4)-RuvB(12)-RuvC(2) complex forms which resolves the HJ.

It localises to the cytoplasm. The catalysed reaction is ATP + H2O = ADP + phosphate + H(+). The RuvA-RuvB-RuvC complex processes Holliday junction (HJ) DNA during genetic recombination and DNA repair, while the RuvA-RuvB complex plays an important role in the rescue of blocked DNA replication forks via replication fork reversal (RFR). RuvA specifically binds to HJ cruciform DNA, conferring on it an open structure. The RuvB hexamer acts as an ATP-dependent pump, pulling dsDNA into and through the RuvAB complex. RuvB forms 2 homohexamers on either side of HJ DNA bound by 1 or 2 RuvA tetramers; 4 subunits per hexamer contact DNA at a time. Coordinated motions by a converter formed by DNA-disengaged RuvB subunits stimulates ATP hydrolysis and nucleotide exchange. Immobilization of the converter enables RuvB to convert the ATP-contained energy into a lever motion, pulling 2 nucleotides of DNA out of the RuvA tetramer per ATP hydrolyzed, thus driving DNA branch migration. The RuvB motors rotate together with the DNA substrate, which together with the progressing nucleotide cycle form the mechanistic basis for DNA recombination by continuous HJ branch migration. Branch migration allows RuvC to scan DNA until it finds its consensus sequence, where it cleaves and resolves cruciform DNA. The protein is Holliday junction branch migration complex subunit RuvB of Pseudomonas fluorescens (strain SBW25).